Consider the following 334-residue polypeptide: Phosphate acyltransferase (334 aa).

Belongs to the PlsX family. Homodimer. Probably interacts with PlsY.

It is found in the cytoplasm. The catalysed reaction is a fatty acyl-[ACP] + phosphate = an acyl phosphate + holo-[ACP]. It participates in lipid metabolism; phospholipid metabolism. In terms of biological role, catalyzes the reversible formation of acyl-phosphate (acyl-PO(4)) from acyl-[acyl-carrier-protein] (acyl-ACP). This enzyme utilizes acyl-ACP as fatty acyl donor, but not acyl-CoA. The chain is Phosphate acyltransferase from Fervidobacterium nodosum (strain ATCC 35602 / DSM 5306 / Rt17-B1).